We begin with the raw amino-acid sequence, 138 residues long: ATP synthase epsilon chain (138 aa).

The disordered stretch occupies residues 88–119 (DREEARSTLSAAQARLDQSEQSEDKQERYEAQ). Residues 109-119 (SEDKQERYEAQ) are compositionally biased toward basic and acidic residues.

Belongs to the ATPase epsilon chain family. F-type ATPases have 2 components, CF(1) - the catalytic core - and CF(0) - the membrane proton channel. CF(1) has five subunits: alpha(3), beta(3), gamma(1), delta(1), epsilon(1). CF(0) has three main subunits: a, b and c.

The protein resides in the cellular thylakoid membrane. Produces ATP from ADP in the presence of a proton gradient across the membrane. In Acaryochloris marina (strain MBIC 11017), this protein is ATP synthase epsilon chain.